The chain runs to 425 residues: Na(+)/H(+) antiporter NhaA 1 (425 aa).

A run of 11 helical transmembrane segments spans residues 20 to 40, 65 to 85, 102 to 122, 131 to 151, 160 to 180, 183 to 203, 218 to 238, 272 to 292, 303 to 323, 342 to 362, and 373 to 393; these read AGGV…NSPL, PHLW…GLEI, LPFI…LAVT, GWAI…ALLG, LFLT…IALA, ASIK…MMAM, FVLL…AGVL, FLIV…GFSL, IAAG…WAAV, LSVL…LAFA, and LGVI…LRFA.

This sequence belongs to the NhaA Na(+)/H(+) (TC 2.A.33) antiporter family.

The protein localises to the cell inner membrane. The catalysed reaction is Na(+)(in) + 2 H(+)(out) = Na(+)(out) + 2 H(+)(in). Its function is as follows. Na(+)/H(+) antiporter that extrudes sodium in exchange for external protons. This Novosphingobium aromaticivorans (strain ATCC 700278 / DSM 12444 / CCUG 56034 / CIP 105152 / NBRC 16084 / F199) protein is Na(+)/H(+) antiporter NhaA 1.